The following is a 92-amino-acid chain: Small ribosomal subunit protein uS19 (92 aa).

The protein belongs to the universal ribosomal protein uS19 family.

Protein S19 forms a complex with S13 that binds strongly to the 16S ribosomal RNA. The protein is Small ribosomal subunit protein uS19 of Neisseria meningitidis serogroup C (strain 053442).